Here is a 364-residue protein sequence, read N- to C-terminus: Chorismate synthase (364 aa).

NADP(+)-binding residues include Arg-47 and Arg-53. FMN contacts are provided by residues 124 to 126 (RSS), Gly-286, 301 to 305 (KPTAT), and Arg-327.

The protein belongs to the chorismate synthase family. In terms of assembly, homotetramer. FMNH2 serves as cofactor.

It carries out the reaction 5-O-(1-carboxyvinyl)-3-phosphoshikimate = chorismate + phosphate. Its pathway is metabolic intermediate biosynthesis; chorismate biosynthesis; chorismate from D-erythrose 4-phosphate and phosphoenolpyruvate: step 7/7. Catalyzes the anti-1,4-elimination of the C-3 phosphate and the C-6 proR hydrogen from 5-enolpyruvylshikimate-3-phosphate (EPSP) to yield chorismate, which is the branch point compound that serves as the starting substrate for the three terminal pathways of aromatic amino acid biosynthesis. This reaction introduces a second double bond into the aromatic ring system. In Acaryochloris marina (strain MBIC 11017), this protein is Chorismate synthase.